The primary structure comprises 156 residues: Transcription antitermination protein NusB (156 aa).

Belongs to the NusB family.

Its function is as follows. Involved in transcription antitermination. Required for transcription of ribosomal RNA (rRNA) genes. Binds specifically to the boxA antiterminator sequence of the ribosomal RNA (rrn) operons. The sequence is that of Transcription antitermination protein NusB from Rickettsia massiliae (strain Mtu5).